Here is a 394-residue protein sequence, read N- to C-terminus: Elongation factor Tu 1 (394 aa).

One can recognise a tr-type G domain in the interval 10–204; the sequence is KPHVNVGTIG…ALDSYIPEPE (195 aa). The interval 19 to 26 is G1; the sequence is GHVDHGKT. 19 to 26 serves as a coordination point for GTP; it reads GHVDHGKT. Residue Thr-26 participates in Mg(2+) binding. Positions 60 to 64 are G2; it reads GITIN. A G3 region spans residues 81–84; that stretch reads DCPG. GTP-binding positions include 81–85 and 136–139; these read DCPGH and NKCD. A G4 region spans residues 136–139; it reads NKCD. A G5 region spans residues 174-176; it reads SAL.

It belongs to the TRAFAC class translation factor GTPase superfamily. Classic translation factor GTPase family. EF-Tu/EF-1A subfamily. Monomer.

The protein resides in the cytoplasm. It catalyses the reaction GTP + H2O = GDP + phosphate + H(+). In terms of biological role, GTP hydrolase that promotes the GTP-dependent binding of aminoacyl-tRNA to the A-site of ribosomes during protein biosynthesis. The chain is Elongation factor Tu 1 from Shewanella sp. (strain MR-4).